The following is a 538-amino-acid chain: Myeloid cell nuclear differentiation antigen-like protein (538 aa).

The region spanning 1-87 (MAEYKKIVLL…AKKLKTEKAK (87 aa)) is the Pyrin domain. Positions 120–306 (SYKSVPSSKK…PQPQNQNIPR (187 aa)) are disordered. 2 stretches are compositionally biased toward basic and acidic residues: residues 135 to 153 (AKTE…DHLP) and 245 to 262 (RREE…KEPD). A compositionally biased stretch (low complexity) spans 276-305 (SPILHSSSSASSNIPSATNQKPQPQNQNIP). An HIN-200 domain is found at 299–499 (PQNQNIPRGA…CGDHSFVKIK (201 aa)).

This sequence belongs to the HIN-200 family. As to expression, highest expression observed in spleen and thymus with moderate levels in bone marrow, lung, skin and heart, low levels in muscle, liver and intestine and little or no expression in brain and pancreas.

The protein resides in the nucleus. Functionally, suppresses cell growth when expressed ectopically. The polypeptide is Myeloid cell nuclear differentiation antigen-like protein (Mus musculus (Mouse)).